The following is a 241-amino-acid chain: Carboxy-S-adenosyl-L-methionine synthase (241 aa).

Residues Tyr38, 63 to 65 (GCS), 88 to 89 (DN), 116 to 117 (DI), Asn131, and Arg198 contribute to the S-adenosyl-L-methionine site.

This sequence belongs to the class I-like SAM-binding methyltransferase superfamily. Cx-SAM synthase family. As to quaternary structure, homodimer.

It catalyses the reaction prephenate + S-adenosyl-L-methionine = carboxy-S-adenosyl-L-methionine + 3-phenylpyruvate + H2O. In terms of biological role, catalyzes the conversion of S-adenosyl-L-methionine (SAM) to carboxy-S-adenosyl-L-methionine (Cx-SAM). In Haemophilus influenzae (strain PittEE), this protein is Carboxy-S-adenosyl-L-methionine synthase.